The following is a 482-amino-acid chain: Ras GTPase-activating protein-binding protein 2 (482 aa).

The region spanning 11 to 133 is the NTF2 domain; sequence VGREFVRQYY…FYVHNDMFRY (123 aa). Positions 140–158 are enriched in acidic residues; the sequence is DSEPELDEESEDEVEEEQE. Disordered regions lie at residues 140–170 and 187–318; these read DSEPELDEESEDEVEEEQEDRQPSPEPVQEN and EPLE…EQND. S141, S149, and S225 each carry phosphoserine. The tract at residues 142 to 220 is acidic disordered region; sequence EPELDEESED…PQVEEKHLEE (79 aa). Basic and acidic residues predominate over residues 191 to 225; that stretch reads ESSHEPEPEPESETKTEELKPQVEEKHLEELEEKS. Position 227 is a phosphothreonine (T227). Residues 247-264 are compositionally biased toward polar residues; sequence ASVTSKNLPPSGTVSSSG. Residue K281 forms a Glycyl lysine isopeptide (Lys-Gly) (interchain with G-Cter in SUMO2) linkage. The span at 290-300 shows a compositional bias: basic and acidic residues; sequence RVREQRPRERP. Residues 331-409 form the RRM domain; sequence HQLFVGNLPH…VRLNVEEKKT (79 aa). Residue K392 is modified to N6-succinyllysine. The segment at 404–476 is RG-rich region; it reads VEEKKTRAAR…GRGTGQMEGR (73 aa). Residues 408 to 432 are compositionally biased toward basic and acidic residues; the sequence is KTRAARERETRGGGDDRRDIRRNDR. The interval 408–482 is disordered; the sequence is KTRAARERET…MEGRFTGQRR (75 aa). The segment covering 433–445 has biased composition (gly residues); that stretch reads GPGGPRGIVGGGM. R457 carries the post-translational modification Omega-N-methylarginine. S466 is modified (phosphoserine). At R468 the chain carries Omega-N-methylarginine.

In terms of assembly, forms homooligomers. Forms heterodimers with G3BP1. Interacts with NFKBIA (via N-terminus). Interacts (via NTF2 domain) with USP10; inhibiting stress granule formation. Interacts (via NTF2 domain) with CAPRIN1; promoting stress granule formation. Associates (via RG-rich region) with 40S ribosome subunits. Interacts with PABPC1.

Its subcellular location is the cytoplasm. It is found in the stress granule. Its activity is regulated as follows. Under physiological conditions, G3BP2 adopts a compact state that is stabilized by intramolecular interactions between the RG-rich and the acidic regions that inhibit phase separation. Upon stress, polysomes disassemble and mRNAs are released in an unfolded protein-free state. Binding of unfolded mRNA to G3BP2 outcompetes the intramolecular interactions and RNA-bound G3BP2 adopts an expanded conformation in which the RG-rich region becomes exposed to engage in protein-protein and protein-RNA interactions, allowing physical cross-linking of RNA molecules to form protein-RNA condensates, leading to liquid-liquid phase separation (LLPS). Its function is as follows. Scaffold protein that plays an essential role in cytoplasmic stress granule formation which acts as a platform for antiviral signaling. Plays an essential role in stress granule formation. Stress granules are membraneless compartments that store mRNAs and proteins, such as stalled translation pre-initiation complexes, in response to stress. Promotes formation of stress granules phase-separated membraneless compartment by undergoing liquid-liquid phase separation (LLPS) upon unfolded RNA-binding: functions as a molecular switch that triggers RNA-dependent LLPS in response to a rise in intracellular free RNA concentrations. The chain is Ras GTPase-activating protein-binding protein 2 (G3bp2) from Mus musculus (Mouse).